The following is a 359-amino-acid chain: Peptide chain release factor 1 (359 aa).

An N5-methylglutamine modification is found at Gln-236.

This sequence belongs to the prokaryotic/mitochondrial release factor family. Methylated by PrmC. Methylation increases the termination efficiency of RF1.

Its subcellular location is the cytoplasm. In terms of biological role, peptide chain release factor 1 directs the termination of translation in response to the peptide chain termination codons UAG and UAA. In Streptococcus pyogenes serotype M6 (strain ATCC BAA-946 / MGAS10394), this protein is Peptide chain release factor 1.